Consider the following 770-residue polypeptide: Cullin-1 (770 aa).

The Cullin neddylation domain maps to 700–761 (DRKLQIQAAI…EKEYLMRVEG (62 aa)). Lys714 is covalently cross-linked (Glycyl lysine isopeptide (Lys-Gly) (interchain with G-Cter in NEDD8)).

Belongs to the cullin family. In terms of assembly, part of a complex that includes culA, fbxA and regA. Formation of this complex is dependent on the MAP kinase erkB. In terms of processing, neddylated; which enhances the ubiquitination activity of SCF.

The protein operates within protein modification; protein ubiquitination. Probable core component of cullin-based SCF-like E3 ubiquitin-protein ligase complexes which mediate the ubiquitination and subsequent proteasomal degradation of target proteins. The E3 ubiquitin-protein ligase activity of the complex is dependent on the neddylation of the cullin subunit. Required at several stages during development. CulA and fbxA regulate multicellular development by targeting regA for degradation via a pathway that requires erkB function, leading to an increase in cAMP and PKA activity. In Dictyostelium discoideum (Social amoeba), this protein is Cullin-1 (culA).